A 340-amino-acid polypeptide reads, in one-letter code: MLHTIGILIWIIIKILVIVVPLLLSVAYLTYAERKVIGYIQVRIGPNRVGLKGLLQPFADLLKLITKEIIVPTRSNKYLFVIAPLFALVPSLVGWAVIPFQEGVVLANINAGVLYLFAMSSLGVYGVLIAGWASNSKYAMFGALRSTAQTVSYEIAMGFALVGVLLAAGSMNLTDIVNSQKGGMLHWWFIPLLPLFLVFWIAGIAETNRAPFDLAEGESEIVAGFHVEYSGIGFALFFLSEYASMILISTFMAILFMGGWLSPFEGITFLDQIFFVVPGFVWLLLKISFFLFVYLWVRATFPRYRYDQLMRLGWKVLIPVTIVWLVVTSLMVVAHVKPWF.

8 helical membrane passes run 4 to 24 (TIGILIWIIIKILVIVVPLLL), 78 to 98 (YLFVIAPLFALVPSLVGWAVI), 113 to 133 (VLYLFAMSSLGVYGVLIAGWA), 151 to 171 (VSYEIAMGFALVGVLLAAGSM), 184 to 204 (MLHWWFIPLLPLFLVFWIAGI), 244 to 264 (SMILISTFMAILFMGGWLSPF), 273 to 293 (IFFVVPGFVWLLLKISFFLFV), and 316 to 336 (VLIPVTIVWLVVTSLMVVAHV).

This sequence belongs to the complex I subunit 1 family. As to quaternary structure, NDH-1 is composed of 14 different subunits. Subunits NuoA, H, J, K, L, M, N constitute the membrane sector of the complex.

It localises to the cell inner membrane. The catalysed reaction is a quinone + NADH + 5 H(+)(in) = a quinol + NAD(+) + 4 H(+)(out). Its function is as follows. NDH-1 shuttles electrons from NADH, via FMN and iron-sulfur (Fe-S) centers, to quinones in the respiratory chain. The immediate electron acceptor for the enzyme in this species is believed to be ubiquinone. Couples the redox reaction to proton translocation (for every two electrons transferred, four hydrogen ions are translocated across the cytoplasmic membrane), and thus conserves the redox energy in a proton gradient. This subunit may bind ubiquinone. The sequence is that of NADH-quinone oxidoreductase subunit H from Legionella pneumophila (strain Paris).